The primary structure comprises 1041 residues: Sodium/potassium-transporting ATPase subunit alpha (1041 aa).

Helical transmembrane passes span 115 to 135, 147 to 167, 312 to 332, and 338 to 358; these read FGGFAMLLWIGAILCFVAYSI, NLYLGIVLSAVVIVTGIFSYY, LITGVAVFLGVTFFVIAFILG, and AVIFLIGIIVANVPEGLLATV. Asp-394 acts as the 4-aspartylphosphate intermediate in catalysis. Lys-526 contacts ATP. The next 4 membrane-spanning stretches (helical) occupy residues 808-828, 870-890, 935-955, and 970-990; these read FLAFILCDIPLPLGTVTILCI, MAYGQIGMIQAAAGFFVYFVI, TCHTAFFISIVVVQWADLIIC, and WALNFGLVFETVLAAFLSYCP.

It belongs to the cation transport ATPase (P-type) (TC 3.A.3) family. Type IIC subfamily. In terms of assembly, the sodium/potassium-transporting ATPase is composed of a catalytic alpha subunit, an auxiliary non-catalytic beta subunit and an additional regulatory subunit. In terms of tissue distribution, high levels are found in some adult tissues: Malpighian tubules, indirect flight muscles, tubular leg muscles and throughout the nervous system (brain, optic lobes, retina and ventral thoracic neuromere). Lower levels are detected at the posterior end where the reproductive organs and rectum are located.

The protein resides in the cell membrane. It carries out the reaction K(+)(out) + Na(+)(in) + ATP + H2O = K(+)(in) + Na(+)(out) + ADP + phosphate + H(+). This is the catalytic component of the active enzyme, which catalyzes the hydrolysis of ATP coupled with the exchange of sodium and potassium ions across the plasma membrane. This action creates the electrochemical gradient of sodium and potassium ions, providing the energy for active transport of various nutrients. The chain is Sodium/potassium-transporting ATPase subunit alpha (Atpalpha) from Drosophila melanogaster (Fruit fly).